A 387-amino-acid polypeptide reads, in one-letter code: Exodeoxyribonuclease 7 large subunit (387 aa).

It belongs to the XseA family. Heterooligomer composed of large and small subunits.

Its subcellular location is the cytoplasm. The enzyme catalyses Exonucleolytic cleavage in either 5'- to 3'- or 3'- to 5'-direction to yield nucleoside 5'-phosphates.. In terms of biological role, bidirectionally degrades single-stranded DNA into large acid-insoluble oligonucleotides, which are then degraded further into small acid-soluble oligonucleotides. This Parasynechococcus marenigrum (strain WH8102) protein is Exodeoxyribonuclease 7 large subunit.